The following is a 420-amino-acid chain: Structure-specific endonuclease subunit SLX1 homolog (420 aa).

The GIY-YIG domain maps to 19-106 (SSDNTYPWQN…QHPLKSRRLR (88 aa)). Disordered regions lie at residues 237–306 (SVEE…AAVN) and 311–330 (DDSADDGTTDGNEDGPDDVA). The span at 247 to 266 (PSSCSVPPSTGSSAAPTPGA) shows a compositional bias: low complexity. A compositionally biased stretch (basic and acidic residues) spans 279 to 301 (VDPRLDSDDRDDNHQFESPDNHE). Residues 311-327 (DDSADDGTTDGNEDGPD) are compositionally biased toward acidic residues. An SLX1-type zinc finger spans residues 348–405 (CGHCHQSVYQELCIVCLNATCTYRAHLLCAAQAAVHPLGQSSPSETRLVPLRHSCPRC).

It belongs to the SLX1 family. As to quaternary structure, forms a heterodimer with a member of the SLX4 family. A divalent metal cation serves as cofactor.

It localises to the nucleus. Functionally, catalytic subunit of a heterodimeric structure-specific endonuclease that resolves DNA secondary structures generated during DNA repair and recombination. Has endonuclease activity towards branched DNA substrates, introducing single-strand cuts in duplex DNA close to junctions with ss-DNA. This is Structure-specific endonuclease subunit SLX1 homolog from Monosiga brevicollis (Choanoflagellate).